A 240-amino-acid chain; its full sequence is Proteasome subunit alpha (240 aa).

The protein belongs to the peptidase T1A family. In terms of assembly, the 20S proteasome core is composed of 14 alpha and 14 beta subunits that assemble into four stacked heptameric rings, resulting in a barrel-shaped structure. The two inner rings, each composed of seven catalytic beta subunits, are sandwiched by two outer rings, each composed of seven alpha subunits. The catalytic chamber with the active sites is on the inside of the barrel. Has a gated structure, the ends of the cylinder being occluded by the N-termini of the alpha-subunits. Is capped at one or both ends by the proteasome regulatory ATPase, PAN.

It is found in the cytoplasm. With respect to regulation, the formation of the proteasomal ATPase PAN-20S proteasome complex, via the docking of the C-termini of PAN into the intersubunit pockets in the alpha-rings, triggers opening of the gate for substrate entry. Interconversion between the open-gate and close-gate conformations leads to a dynamic regulation of the 20S proteasome proteolysis activity. In terms of biological role, component of the proteasome core, a large protease complex with broad specificity involved in protein degradation. The sequence is that of Proteasome subunit alpha from Methanoregula boonei (strain DSM 21154 / JCM 14090 / 6A8).